The following is a 495-amino-acid chain: Bifunctional protein GlmU (495 aa).

Residues 1-241 are pyrophosphorylase; that stretch reads MTFPGDTAVL…SALVAGVNNR (241 aa). UDP-N-acetyl-alpha-D-glucosamine contacts are provided by residues 12–15, Lys-26, Gln-83, 88–89, 112–114, Gly-151, Glu-166, Asn-181, and Asn-239; these read LAAG, GT, and SGD. Asp-114 serves as a coordination point for Mg(2+). Asn-239 provides a ligand contact to Mg(2+). Residues 242 to 262 are linker; that stretch reads VQLAQLASELNRRVVAAHQLA. Residues 263–495 form an N-acetyltransferase region; sequence GVTVVDPATT…TQPPDADQTP (233 aa). UDP-N-acetyl-alpha-D-glucosamine is bound by residues Arg-344 and Lys-362. The active-site Proton acceptor is the His-374. Positions 377 and 388 each coordinate UDP-N-acetyl-alpha-D-glucosamine. Residues Ala-391, 397-398, Ser-416, and Ala-434 each bind acetyl-CoA; that span reads NY. A disordered region spans residues 457-495; it reads IENWVQRKRPGSPAAQASKRASEMACQQPTQPPDADQTP. Positions 483–495 are enriched in low complexity; sequence QQPTQPPDADQTP.

The protein in the N-terminal section; belongs to the N-acetylglucosamine-1-phosphate uridyltransferase family. This sequence in the C-terminal section; belongs to the transferase hexapeptide repeat family. Homotrimer. It depends on Mg(2+) as a cofactor.

It is found in the cytoplasm. It carries out the reaction alpha-D-glucosamine 1-phosphate + acetyl-CoA = N-acetyl-alpha-D-glucosamine 1-phosphate + CoA + H(+). The enzyme catalyses N-acetyl-alpha-D-glucosamine 1-phosphate + UTP + H(+) = UDP-N-acetyl-alpha-D-glucosamine + diphosphate. It functions in the pathway nucleotide-sugar biosynthesis; UDP-N-acetyl-alpha-D-glucosamine biosynthesis; N-acetyl-alpha-D-glucosamine 1-phosphate from alpha-D-glucosamine 6-phosphate (route II): step 2/2. Its pathway is nucleotide-sugar biosynthesis; UDP-N-acetyl-alpha-D-glucosamine biosynthesis; UDP-N-acetyl-alpha-D-glucosamine from N-acetyl-alpha-D-glucosamine 1-phosphate: step 1/1. It participates in bacterial outer membrane biogenesis; LPS lipid A biosynthesis. Its function is as follows. Catalyzes the last two sequential reactions in the de novo biosynthetic pathway for UDP-N-acetylglucosamine (UDP-GlcNAc). The C-terminal domain catalyzes the transfer of acetyl group from acetyl coenzyme A to glucosamine-1-phosphate (GlcN-1-P) to produce N-acetylglucosamine-1-phosphate (GlcNAc-1-P), which is converted into UDP-GlcNAc by the transfer of uridine 5-monophosphate (from uridine 5-triphosphate), a reaction catalyzed by the N-terminal domain. The protein is Bifunctional protein GlmU of Mycobacterium bovis (strain ATCC BAA-935 / AF2122/97).